Here is a 444-residue protein sequence, read N- to C-terminus: Tubulin beta-9 chain (444 aa).

GTP-binding residues include Q11, E69, S138, G142, T143, G144, N204, and N226. E69 contributes to the Mg(2+) binding site.

It belongs to the tubulin family. As to quaternary structure, dimer of alpha and beta chains. A typical microtubule is a hollow water-filled tube with an outer diameter of 25 nm and an inner diameter of 15 nM. Alpha-beta heterodimers associate head-to-tail to form protofilaments running lengthwise along the microtubule wall with the beta-tubulin subunit facing the microtubule plus end conferring a structural polarity. Microtubules usually have 13 protofilaments but different protofilament numbers can be found in some organisms and specialized cells. Interacts with TFCA. The cofactor is Mg(2+).

The protein resides in the cytoplasm. It localises to the cytoskeleton. Its function is as follows. Tubulin is the major constituent of microtubules, a cylinder consisting of laterally associated linear protofilaments composed of alpha- and beta-tubulin heterodimers. Microtubules grow by the addition of GTP-tubulin dimers to the microtubule end, where a stabilizing cap forms. Below the cap, tubulin dimers are in GDP-bound state, owing to GTPase activity of alpha-tubulin. The sequence is that of Tubulin beta-9 chain (TUBB9) from Arabidopsis thaliana (Mouse-ear cress).